A 452-amino-acid chain; its full sequence is UDP-N-acetylmuramoylalanine--D-glutamate ligase (452 aa).

Residue 115 to 121 (GTNGKTT) coordinates ATP.

This sequence belongs to the MurCDEF family.

It is found in the cytoplasm. It carries out the reaction UDP-N-acetyl-alpha-D-muramoyl-L-alanine + D-glutamate + ATP = UDP-N-acetyl-alpha-D-muramoyl-L-alanyl-D-glutamate + ADP + phosphate + H(+). It participates in cell wall biogenesis; peptidoglycan biosynthesis. Functionally, cell wall formation. Catalyzes the addition of glutamate to the nucleotide precursor UDP-N-acetylmuramoyl-L-alanine (UMA). This chain is UDP-N-acetylmuramoylalanine--D-glutamate ligase, found in Geobacter metallireducens (strain ATCC 53774 / DSM 7210 / GS-15).